The chain runs to 646 residues: Macrolide export ATP-binding/permease protein MacB (646 aa).

An ABC transporter domain is found at 5–243; the sequence is IELKGVSRTY…TLPKTNRIRQ (239 aa). Position 41–48 (41–48) interacts with ATP; sequence GASGSGKS. Helical transmembrane passes span 272–292, 518–538, 570–590, and 611–631; these read TLTM…VALG, FSIL…IGVM, IIEA…LSYI, and AAVA…YLPA.

The protein belongs to the ABC transporter superfamily. Macrolide exporter (TC 3.A.1.122) family. As to quaternary structure, homodimer. Part of the tripartite efflux system MacAB-TolC, which is composed of an inner membrane transporter, MacB, a periplasmic membrane fusion protein, MacA, and an outer membrane component, TolC. The complex forms a large protein conduit and can translocate molecules across both the inner and outer membranes. Interacts with MacA.

The protein localises to the cell inner membrane. In terms of biological role, part of the tripartite efflux system MacAB-TolC. MacB is a non-canonical ABC transporter that contains transmembrane domains (TMD), which form a pore in the inner membrane, and an ATP-binding domain (NBD), which is responsible for energy generation. Confers resistance against macrolides. This Escherichia coli protein is Macrolide export ATP-binding/permease protein MacB.